We begin with the raw amino-acid sequence, 64 residues long: MLLDEKLDKLMKTILRLKAYKEEENLRRVIGEFHSIIDYAYEGMYIAEDMLREEESKGKEVSTY.

The sequence is that of SPbeta prophage-derived uncharacterized protein YopV (yopV) from Bacillus subtilis (strain 168).